The primary structure comprises 60 residues: UPF0434 protein Pnap_1922 (60 aa).

It belongs to the UPF0434 family.

The polypeptide is UPF0434 protein Pnap_1922 (Polaromonas naphthalenivorans (strain CJ2)).